We begin with the raw amino-acid sequence, 120 residues long: Protein FAM241B (120 aa).

Residues Gln12–Ala59 are disordered. 2 stretches are compositionally biased toward low complexity: residues Arg19–Gly39 and Pro47–Ala59. Phosphoserine is present on Ser61. The chain crosses the membrane as a helical span at residues Ile91–Val111.

The protein belongs to the FAM241 family.

It localises to the membrane. Its function is as follows. May play a role in lysosome homeostasis. The sequence is that of Protein FAM241B from Mus musculus (Mouse).